Consider the following 217-residue polypeptide: Orotate phosphoribosyltransferase (217 aa).

Position 26 (Lys26) interacts with 5-phospho-alpha-D-ribose 1-diphosphate. 34–35 (FF) contributes to the orotate binding site. Residues 72–73 (YK), Arg99, Lys100, Lys103, His105, and 124–132 (DDVITAGTA) each bind 5-phospho-alpha-D-ribose 1-diphosphate. Orotate is bound by residues Thr128 and Arg156.

The protein belongs to the purine/pyrimidine phosphoribosyltransferase family. PyrE subfamily. Homodimer. Mg(2+) serves as cofactor.

It catalyses the reaction orotidine 5'-phosphate + diphosphate = orotate + 5-phospho-alpha-D-ribose 1-diphosphate. It participates in pyrimidine metabolism; UMP biosynthesis via de novo pathway; UMP from orotate: step 1/2. Functionally, catalyzes the transfer of a ribosyl phosphate group from 5-phosphoribose 1-diphosphate to orotate, leading to the formation of orotidine monophosphate (OMP). This Aeromonas salmonicida (strain A449) protein is Orotate phosphoribosyltransferase.